The following is a 182-amino-acid chain: UPF0301 protein NMC1274 (182 aa).

This sequence belongs to the UPF0301 (AlgH) family.

This is UPF0301 protein NMC1274 from Neisseria meningitidis serogroup C / serotype 2a (strain ATCC 700532 / DSM 15464 / FAM18).